A 137-amino-acid chain; its full sequence is Large ribosomal subunit protein uL16 (137 aa).

Belongs to the universal ribosomal protein uL16 family. Part of the 50S ribosomal subunit.

Functionally, binds 23S rRNA and is also seen to make contacts with the A and possibly P site tRNAs. The chain is Large ribosomal subunit protein uL16 from Streptococcus equi subsp. zooepidemicus (strain H70).